Reading from the N-terminus, the 360-residue chain is D-alanine--D-alanine ligase (360 aa).

The ATP-grasp domain maps to 146-352; sequence KICAEHAGLH…FSQLIDRLLQ (207 aa). Residue 179-234 participates in ATP binding; sequence LEEFTLPFFVKPASQGSSIGITKVHRPEELAAALEKAFMVDTKVLIEKTIEGREIE. Mg(2+) is bound by residues Asp-305, Glu-319, and Asn-321.

The protein belongs to the D-alanine--D-alanine ligase family. The cofactor is Mg(2+). Requires Mn(2+) as cofactor.

The protein localises to the cytoplasm. It catalyses the reaction 2 D-alanine + ATP = D-alanyl-D-alanine + ADP + phosphate + H(+). It participates in cell wall biogenesis; peptidoglycan biosynthesis. In terms of biological role, cell wall formation. The chain is D-alanine--D-alanine ligase from Prosthecochloris aestuarii (strain DSM 271 / SK 413).